A 489-amino-acid chain; its full sequence is 3-octaprenyl-4-hydroxybenzoate carboxy-lyase (489 aa).

Mn(2+) is bound at residue Asn-172. Prenylated FMN contacts are provided by residues 175–177, 189–191, and 194–195; these read IYR, RWL, and RG. Glu-238 contributes to the Mn(2+) binding site. Asp-287 (proton donor) is an active-site residue.

This sequence belongs to the UbiD family. In terms of assembly, homohexamer. The cofactor is prenylated FMN. It depends on Mn(2+) as a cofactor.

It localises to the cell membrane. It catalyses the reaction a 4-hydroxy-3-(all-trans-polyprenyl)benzoate + H(+) = a 2-(all-trans-polyprenyl)phenol + CO2. Its pathway is cofactor biosynthesis; ubiquinone biosynthesis. Catalyzes the decarboxylation of 3-octaprenyl-4-hydroxy benzoate to 2-octaprenylphenol, an intermediate step in ubiquinone biosynthesis. In Salmonella arizonae (strain ATCC BAA-731 / CDC346-86 / RSK2980), this protein is 3-octaprenyl-4-hydroxybenzoate carboxy-lyase.